The chain runs to 176 residues: Large ribosomal subunit protein uL6 (176 aa).

It belongs to the universal ribosomal protein uL6 family. As to quaternary structure, part of the 50S ribosomal subunit.

In terms of biological role, this protein binds to the 23S rRNA, and is important in its secondary structure. It is located near the subunit interface in the base of the L7/L12 stalk, and near the tRNA binding site of the peptidyltransferase center. This is Large ribosomal subunit protein uL6 from Burkholderia vietnamiensis (strain G4 / LMG 22486) (Burkholderia cepacia (strain R1808)).